A 308-amino-acid chain; its full sequence is MSDLTRFTQYEHLDKVKKVVAIGGGHGLGRLMSALSFMKSRLTGIVTTTDNGGSTGRIRLNHGGIAWGDLRNCLNQIITEPSTASSLFEYRFTGQGELSGHNLGNLMLKALENMHIRPVEAIHLVRELLHVKSHIFPMSESPVHLAAVLQSGASIVGEVGIDNLTELPKSIFLVPLVKATPEAIEALQEADVILFGPGSFLTSILPPILLPEVIEALQKSHAKKIFIDNLALEQSPAASLSLSDRIQWIHHTVGKEIIDATIVPTNANDLCENLSLKVMVRPLQADDISYRHDRSLLSQAIDDLLGEL.

Belongs to the gluconeogenesis factor family.

It is found in the cytoplasm. Functionally, required for morphogenesis under gluconeogenic growth conditions. This is Putative gluconeogenesis factor from Pasteurella multocida (strain Pm70).